A 419-amino-acid polypeptide reads, in one-letter code: N-acylneuraminate cytidylyltransferase (419 aa).

The protein belongs to the CMP-NeuNAc synthase family. In terms of assembly, monomer. May form aggregates. It depends on Mg(2+) as a cofactor. Requires Mn(2+) as cofactor.

The protein localises to the cytoplasm. It catalyses the reaction an N-acylneuraminate + CTP = a CMP-N-acyl-beta-neuraminate + diphosphate. Inhibited by the CTP analogs 5-mercuri-CTP and CTP-2',3'-dialdehyde. Catalyzes the formation of CMP-N-acetylneuraminic acid (CMP-NeuNAc), which is essential for the formation of the capsule. The polypeptide is N-acylneuraminate cytidylyltransferase (neuA) (Escherichia coli O18:K1:H7 (strain RS218 / NMEC)).